The sequence spans 520 residues: MNGDEQNKKKLRSDAMFGKINQFVTLQKDETAKYNSLFTKVTESIVSILKEKDEVFKKYYRNTMYAGSFYKQTRVGQPKEFDLNLILCLPDIDSVKIEKGRPGFAKIKFDERKISSVWTEHKVLNKWLDSEGYLDNGKLRGWFEGMVKKSLNPSEKNSNKFRIYSKDSSSPLCEAEIKKSGPAFTLIVNDGSMEFAVDLVPVLEFSQSPPLSNFEKLKEPWHLVPKPLKNGDVPNQNWRYCFYHYEKEMLKKNGKVKPIIRHIKKLRDTQNWSILASYYIETLFFHVLSKNDFDQNESQTRLLVYMLKELSKAFKSGLLNYFWDKTFNLFGELTEDQIVGVQNRLDKIIKEIEADPTTMTQYFLTKEEQKKLKEIEEKEKTQPKKEVNVDKTNGLSSTFPLIRETKSEKNKKIIQESENRETSKNEIKALKEMVLSLKAEFKDFKNSIKQKPIDQTPETEGTDEKEMKKLLLLLINEVKQLKLNVGRLETKIDQTNEQIKNIKSQSTFFDVMETGVPLLN.

Residues Ser-68 and 80-82 contribute to the ATP site; that span reads EFD. Residues Glu-80, Asp-82, and Asp-198 each contribute to the Mg(2+) site. Asp-198 serves as a coordination point for GTP. Residue Lys-264 coordinates ATP. Residues Leu-288 and Asp-294 each contribute to the Mn(2+) site.

The protein belongs to the mab-21 family. The cofactor is Mg(2+). Mn(2+) is required as a cofactor.

The catalysed reaction is GTP + ATP = 2',3'-cGAMP + 2 diphosphate. It catalyses the reaction GTP + ATP = pppGp(2'-5')A + diphosphate. The enzyme catalyses pppGp(2'-5')A = 2',3'-cGAMP + diphosphate. Its function is as follows. Nucleotidyltransferase that catalyzes the formation of cyclic GMP-AMP (2',3'-cGAMP) from ATP and GTP and plays a key role in innate immunity. Acts as a key sensor of double-stranded RNA (dsRNA), the presence of dsRNA in the cytoplasm being a danger signal that triggers the immune responses. Directly binds dsRNA, activating the nucleotidyltransferase activity, leading to synthesis of 2',3'-cGAMP, a second messenger that binds to and activates Sting, thereby triggering the immune response via activation of the NF-kappa-B transcription factor. In Microplitis demolitor (Parasitoid wasp), this protein is Cyclic GMP-AMP synthase-like receptor.